A 307-amino-acid polypeptide reads, in one-letter code: Elongation factor Ts (307 aa).

Residues 80-83 (TDFV) form an involved in Mg(2+) ion dislocation from EF-Tu region.

It belongs to the EF-Ts family.

It is found in the cytoplasm. Its function is as follows. Associates with the EF-Tu.GDP complex and induces the exchange of GDP to GTP. It remains bound to the aminoacyl-tRNA.EF-Tu.GTP complex up to the GTP hydrolysis stage on the ribosome. The protein is Elongation factor Ts of Albidiferax ferrireducens (strain ATCC BAA-621 / DSM 15236 / T118) (Rhodoferax ferrireducens).